Here is a 294-residue protein sequence, read N- to C-terminus: Putative S-adenosyl-L-methionine-dependent methyltransferase RHA1_ro00605 (294 aa).

S-adenosyl-L-methionine is bound by residues Asp-120 and 149–150; that span reads DL.

It belongs to the UPF0677 family.

Exhibits S-adenosyl-L-methionine-dependent methyltransferase activity. The sequence is that of Putative S-adenosyl-L-methionine-dependent methyltransferase RHA1_ro00605 from Rhodococcus jostii (strain RHA1).